The primary structure comprises 580 residues: Keratin, type II cytoskeletal 5 (580 aa).

The segment at 1–161 is head; that stretch reads MSRQSSVSFR…DPTIQRVRTE (161 aa). Phosphoserine occurs at positions 5, 8, 16, and 21. Thr24 is modified (phosphothreonine; by CDK1). Phosphoserine is present on residues Ser26, Ser36, Ser47, Ser61, Ser68, Ser72, Ser75, and Ser79. Position 145 is a phosphothreonine; by CDK1 (Thr145). Residue Thr160 is modified to Phosphothreonine; by AURKB. Residues 162 to 197 form a coil 1A region; sequence EREQIKTLNNKFASFIDKVRFLEQQNKVLDTKWALL. The region spanning 162 to 475 is the IF rod domain; that stretch reads EREQIKTLNN…KLLEGEECRL (314 aa). The tract at residues 198–216 is linker 1; the sequence is QEQGTKTIKQNLDPLFEQY. The segment at 217-309 is coil 1B; it reads INNLRRQLDG…FFDAELSQMQ (93 aa). Residues 310–332 are linker 12; it reads THVSDTSVVLSMDNNRSLDLDSI. The segment at 333–471 is coil 2; it reads IAEVKAQYED…ATYRKLLEGE (139 aa). The segment at 472-580 is tail; sequence ECRLSGEGVG…TSSSRRSFKS (109 aa). Arg526 is subject to Omega-N-methylarginine. Residues 555-580 are disordered; that stretch reads FGSGGGSGSSVKFVSTTSSSRRSFKS. Low complexity predominate over residues 563-580; it reads SSVKFVSTTSSSRRSFKS.

The protein belongs to the intermediate filament family. Heterodimer of a type I and a type II keratin. Heterodimer with type I keratin KRT25 leading to the formation of keratin intermediate filament (KIF) network. Forms a heterodimer (via 2B domains) with KRT14 (via 2B domains). Interacts with PLEC isoform 1C, when in a heterodimer with KRT14. Interacts with TCHP. Interacts with EPPK1. Interacts with AMELX. Interacts with PKP1 (via N-terminus) and PKP2. Post-translationally, phosphorylated by CDK1, AURKB and Rho-kinase, phosphorylation is regulated by the cell cycle. Thr-24 phosphorylation, mediated by CDK1, peaks during prometaphase or metaphase cells with phosphorylated filamentous structures evident throughout the cytoplasm during early mitosis. CDK1 phosphorylates Thr-24 in mitotic cells at the site of injury. In terms of processing, O-glycosylated. As to expression, expressed in the corneal epithelium (at protein level). Expressed in the epidermis of the ear (at protein level). Expressed in the basal and spinous layers of the skin at birth (at protein level).

The protein localises to the cytoplasm. In terms of biological role, required for the formation of keratin intermediate filaments in the basal epidermis and maintenance of the skin barrier in response to mechanical stress. Regulates the recruitment of Langerhans cells to the epidermis, potentially by modulation of the abundance of macrophage chemotactic cytokines, macrophage inflammatory cytokines and CTNND1 localization in keratinocytes. This Mus musculus (Mouse) protein is Keratin, type II cytoskeletal 5.